Reading from the N-terminus, the 522-residue chain is Leucine-rich repeat transmembrane neuronal protein 1 (522 aa).

Residues 1-34 form the signal peptide; that stretch reads MDFLLLGLCLYWLLRRPSGVVLCLLGACFQMLPA. Residues 35 to 63 enclose the LRRNT domain; sequence APSGCPQLCRCEGRLLYCEALNPTEAPHN. The Extracellular portion of the chain corresponds to 35–427; sequence APSGCPQLCR…HAENAVQIHK (393 aa). Asparagine 63 carries an N-linked (GlcNAc...) asparagine glycan. LRR repeat units follow at residues 64 to 87, 89 to 111, 112 to 135, 137 to 159, 161 to 183, 184 to 207, 209 to 231, 233 to 255, 256 to 278, and 279 to 302; these read LSGLLGLSLRYNSLSELRAGQFTG, MQLTWLYLDHNHICSVQGDAFQK, LRRVKELTLSSNQITQLPNTTFRP, PNLRSVDLSYNKLQALAPDLFHG, RKLTTLHMRANAIQFVPVRIFQD, CRSLKFLDIGYNQLKSLARNSFAG, FKLTELHLEHNDLVKVNFAHFPR, ISLHSLCLRRNKVAIVVSSLDWV, WNLKKMDLSGNEIEYMEPHVFET, and VPHLQSLQLDSNRLTYIEPRILNS. Residue asparagine 130 is glycosylated (N-linked (GlcNAc...) asparagine). Positions 314 to 365 constitute an LRRCT domain; sequence NLWDCGRNVCALASWLSNFQGRYDGNLQCASPEYAQGEDVLDAVYAFHLCED. Asparagine 380 carries N-linked (GlcNAc...) asparagine glycosylation. The tract at residues 382–401 is disordered; that stretch reads SDLGPPASSATTLADGGEGQ. The helical transmembrane segment at 428 to 448 threads the bilayer; it reads VVTGTMALIFSFLIVVLVLYV. Over 449 to 522 the chain is Cytoplasmic; the sequence is SWKCFPASLR…HQQPARECEV (74 aa).

This sequence belongs to the LRRTM family.

Its subcellular location is the cell membrane. It is found in the postsynaptic cell membrane. Its function is as follows. Exhibits strong synaptogenic activity, restricted to excitatory presynaptic differentiation, acting at both pre- and postsynaptic level. This chain is Leucine-rich repeat transmembrane neuronal protein 1 (LRRTM1), found in Pongo abelii (Sumatran orangutan).